We begin with the raw amino-acid sequence, 57 residues long: uncharacterized protein (57 aa).

Residues P3–L23 traverse the membrane as a helical segment. The interval K38–T57 is disordered.

The protein localises to the host membrane. This is an uncharacterized protein from Acidianus bottle-shaped virus (isolate Italy/Pozzuoli) (ABV).